The chain runs to 355 residues: MTALKNDRFLRALLKQPVDVTPIWMMRQAGRYLPEYRATRAKAGDFVSLMKNPELACEVTIQPLDRYPQLDAAILFSDILTIPDAMGQGLYFETGEGPRFKKAVGSLADIEALPVPDPEKDLGYVMDAVRTIRRELNGRVPLIGFSGSPWTLATYMVEGGSSKDFRKSKAMLYDNPQAMHALLDKLAQSVTAYLNGQILAGAQAVQIFDSWGGALSAAAYQEFSLAYMKKIVDGLIREHDGRRVPVILFTKGGGLWLESMADSGAEALGLDWTCDIGSARARVGSKVALQGNMDPAVLYAKPAAIRAEVARILAAYGAGSGHVFNLGHGITPEVDPAHAGAFFEAVHELSAAYHR.

Residues Arg27–Arg31, Asp78, Tyr155, Ser210, and His328 each bind substrate.

The protein belongs to the uroporphyrinogen decarboxylase family. As to quaternary structure, homodimer.

It localises to the cytoplasm. The enzyme catalyses uroporphyrinogen III + 4 H(+) = coproporphyrinogen III + 4 CO2. Its pathway is porphyrin-containing compound metabolism; protoporphyrin-IX biosynthesis; coproporphyrinogen-III from 5-aminolevulinate: step 4/4. Catalyzes the decarboxylation of four acetate groups of uroporphyrinogen-III to yield coproporphyrinogen-III. This is Uroporphyrinogen decarboxylase from Ectopseudomonas mendocina (strain ymp) (Pseudomonas mendocina).